A 1236-amino-acid chain; its full sequence is ATP-dependent helicase/nuclease subunit A (1236 aa).

The 456-residue stretch at 2-457 (AHWTIEQEEA…VDLNKNFRSH (456 aa)) folds into the UvrD-like helicase ATP-binding domain. Residue 23 to 30 (AAAGSGKT) participates in ATP binding. The UvrD-like helicase C-terminal domain maps to 515–816 (NTAKRVEICI…RIMSIHKSKG (302 aa)).

This sequence belongs to the helicase family. AddA subfamily. In terms of assembly, heterodimer of AddA and AddB/RexB. It depends on Mg(2+) as a cofactor.

The enzyme catalyses Couples ATP hydrolysis with the unwinding of duplex DNA by translocating in the 3'-5' direction.. The catalysed reaction is ATP + H2O = ADP + phosphate + H(+). In terms of biological role, the heterodimer acts as both an ATP-dependent DNA helicase and an ATP-dependent, dual-direction single-stranded exonuclease. Recognizes the chi site generating a DNA molecule suitable for the initiation of homologous recombination. The AddA nuclease domain is required for chi fragment generation; this subunit has the helicase and 3' -&gt; 5' nuclease activities. This is ATP-dependent helicase/nuclease subunit A from Syntrophomonas wolfei subsp. wolfei (strain DSM 2245B / Goettingen).